Here is a 524-residue protein sequence, read N- to C-terminus: Bifunctional NAD(P)H-hydrate repair enzyme Nnr (524 aa).

Residues 1–219 (MKVARVSEIK…ISYPRALLED (219 aa)) form an NAD(P)H-hydrate epimerase region. Residues 9–218 (IKLLDREAAE…HISYPRALLE (210 aa)) enclose the YjeF N-terminal domain. The segment at 57 to 61 (NNGGD) is NADPHX 1; for epimerase activity. K(+)-binding residues include Asn58 and Asp128. The NADPHX 1; for epimerase activity stretch occupies residues 132–138 (GTGLSRP). Positions 143 and 161 each coordinate (6S)-NADPHX. Position 164 (Ser164) interacts with K(+). One can recognise a YjeF C-terminal domain in the interval 224 to 507 (VETNDPVPLP…NYLPKALRAL (284 aa)). The interval 224–524 (VETNDPVPLP…LERYTIKVLP (301 aa)) is ADP-dependent (S)-NAD(P)H-hydrate dehydratase. Gly330 provides a ligand contact to (6S)-NADPHX. Residues 381–387 (HAGEMSR) form an NADPHX 2; for dehydratase activity region. ADP contacts are provided by residues 418–422 (KGAHT) and 438–447 (NPGMATAGSG). A (6S)-NADPHX-binding site is contributed by Asp448.

It in the N-terminal section; belongs to the NnrE/AIBP family. In the C-terminal section; belongs to the NnrD/CARKD family. K(+) serves as cofactor.

It carries out the reaction (6S)-NADHX + ADP = AMP + phosphate + NADH + H(+). The catalysed reaction is (6S)-NADPHX + ADP = AMP + phosphate + NADPH + H(+). The enzyme catalyses (6R)-NADHX = (6S)-NADHX. It catalyses the reaction (6R)-NADPHX = (6S)-NADPHX. Functionally, bifunctional enzyme that catalyzes the epimerization of the S- and R-forms of NAD(P)HX and the dehydration of the S-form of NAD(P)HX at the expense of ADP, which is converted to AMP. This allows the repair of both epimers of NAD(P)HX, a damaged form of NAD(P)H that is a result of enzymatic or heat-dependent hydration. In Thermofilum pendens (strain DSM 2475 / Hrk 5), this protein is Bifunctional NAD(P)H-hydrate repair enzyme Nnr (nnr).